A 328-amino-acid chain; its full sequence is Glycerophosphodiester phosphodiesterase GDPD4 (328 aa).

A helical membrane pass occupies residues 35–55; it reads TILFAVIFLAIFPPLYFHFKL. One can recognise a GP-PDE domain in the interval 73–312; that stretch reads PLVCAHGGDS…SDPSMFQGLM (240 aa).

This sequence belongs to the glycerophosphoryl diester phosphodiesterase family. In terms of tissue distribution, expressed in rosette and cauline leaves.

The protein localises to the membrane. The catalysed reaction is a sn-glycero-3-phosphodiester + H2O = an alcohol + sn-glycerol 3-phosphate + H(+). The sequence is that of Glycerophosphodiester phosphodiesterase GDPD4 from Arabidopsis thaliana (Mouse-ear cress).